Consider the following 358-residue polypeptide: Reverse gyrase subunit A (358 aa).

The region spanning methionine 1 to valine 351 is the Topo IA-type catalytic domain. The active-site O-(5'-phospho-DNA)-tyrosine intermediate is the tyrosine 78.

Belongs to the type IA topoisomerase family. In terms of assembly, heterodimer of an RgyrA and RgyrB subunit. The topoisomerase domain is shared between the two subunits. Mg(2+) serves as cofactor.

Its subcellular location is the cytoplasm. Modifies the topological state of DNA by introducing positive supercoils in an ATP-dependent process; dATP also allows positive supercoiling. Increases the linking number in steps of +1. Only this subunit binds DNA, in isolation it does not hydrolyze ATP. Hydrolyzes ATP only in the presence of DNA. Transiently cleaves a single DNA strand and remains covalently bound to the 5' DNA end probably through a tyrosine residue. It changes linking number in steps of one, and nicks DNA preferentially at 5'-CNNN | 3'-sites with a strong preference for 4 pyrimidine residues. There are about 1000 heterodimers per cell. May be involved in rewinding the DNA strands in the regions of the chromosome that have opened up to allow transcription or replication. In terms of biological role, reverse gyrase activity is reconstituted after incubation at 80 degrees Celsius for 5 minutes, positive supercoiling requires ATP and Mg(2+). In the presence of ATP it binds and nicks substrate but does not make closed product. This is Reverse gyrase subunit A from Methanopyrus kandleri (strain AV19 / DSM 6324 / JCM 9639 / NBRC 100938).